The primary structure comprises 470 residues: Acetyl-CoA decarbonylase/synthase complex subunit beta 2 (470 aa).

[Ni-Fe-S] cluster contacts are provided by Cys189, Cys192, Cys278, and Cys280.

It belongs to the CdhC family. As to quaternary structure, monomer. The ACDS complex is made up of alpha, epsilon, beta, gamma and delta chains with a probable stoichiometry of (alpha(2)epsilon(2))(4)-beta(8)-(gamma(1)delta(1))(8) (Potential). The cofactor is [Ni-Fe-S] cluster.

The enzyme catalyses Co(I)-[corrinoid Fe-S protein] + acetyl-CoA + H(+) = methyl-Co(III)-[corrinoid Fe-S protein] + CO + CoA. It functions in the pathway one-carbon metabolism; methanogenesis from acetate. Its function is as follows. Part of a complex that catalyzes the reversible cleavage of acetyl-CoA, allowing growth on acetate as sole source of carbon and energy. The alpha-epsilon complex generates CO from CO(2), while the beta subunit (this protein) combines the CO with CoA and a methyl group to form acetyl-CoA. The methyl group, which is incorporated into acetyl-CoA, is transferred to the beta subunit by a corrinoid iron-sulfur protein (the gamma-delta complex). This Methanosarcina acetivorans (strain ATCC 35395 / DSM 2834 / JCM 12185 / C2A) protein is Acetyl-CoA decarbonylase/synthase complex subunit beta 2 (cdhC2).